Here is a 1055-residue protein sequence, read N- to C-terminus: Type I restriction enzyme HindI endonuclease subunit (1055 aa).

One can recognise a Helicase ATP-binding domain in the interval 287-468 (TSEKGDRRIG…QDVFGRYVSI (182 aa)).

The protein belongs to the HsdR family. In terms of assembly, the type I restriction/modification system is composed of three polypeptides R, M and S; the restriction enzyme has stoichiometry R(2)M(2)S(1) while the methyltransferase is M(2)S(1).

The catalysed reaction is Endonucleolytic cleavage of DNA to give random double-stranded fragments with terminal 5'-phosphates, ATP is simultaneously hydrolyzed.. The restriction (R) subunit of a type I restriction enzyme that recognizes 5'-RAACN(5)TAG-3' and cleaves a random distance away. Subunit R is required for both nuclease and ATPase activities, but not for modification. After locating a non-methylated recognition site, the enzyme complex serves as a molecular motor that translocates DNA in an ATP-dependent manner until a collision occurs that triggers cleavage. This chain is Type I restriction enzyme HindI endonuclease subunit, found in Haemophilus influenzae (strain ATCC 51907 / DSM 11121 / KW20 / Rd).